The sequence spans 296 residues: Ribosomal RNA small subunit methyltransferase A (296 aa).

Positions 30, 32, 57, 78, 103, and 128 each coordinate S-adenosyl-L-methionine.

The protein belongs to the class I-like SAM-binding methyltransferase superfamily. rRNA adenine N(6)-methyltransferase family. RsmA subfamily.

It is found in the cytoplasm. The catalysed reaction is adenosine(1518)/adenosine(1519) in 16S rRNA + 4 S-adenosyl-L-methionine = N(6)-dimethyladenosine(1518)/N(6)-dimethyladenosine(1519) in 16S rRNA + 4 S-adenosyl-L-homocysteine + 4 H(+). In terms of biological role, specifically dimethylates two adjacent adenosines (A1518 and A1519) in the loop of a conserved hairpin near the 3'-end of 16S rRNA in the 30S particle. May play a critical role in biogenesis of 30S subunits. This is Ribosomal RNA small subunit methyltransferase A from Macrococcus caseolyticus (strain JCSC5402) (Macrococcoides caseolyticum).